A 123-amino-acid chain; its full sequence is Small ribosomal subunit protein uS12cz/uS12cy (123 aa).

Belongs to the universal ribosomal protein uS12 family. In terms of assembly, part of the 30S ribosomal subunit.

Its subcellular location is the plastid. It is found in the chloroplast. With S4 and S5 plays an important role in translational accuracy. Located at the interface of the 30S and 50S subunits. In Angiopteris evecta (Mule's foot fern), this protein is Small ribosomal subunit protein uS12cz/uS12cy (rps12-A).